A 497-amino-acid chain; its full sequence is Serine/threonine protein phosphatase 2A 57 kDa regulatory subunit B' epsilon isoform (497 aa).

Positions 12-71 (KFNKSDQHHQDNNNNNNNTSTNTVVRGSRTTTPAPSSVSNGESQTTAQSPSQTPNHPMFT) are disordered. The segment covering 23–34 (NNNNNNNTSTNT) has biased composition (low complexity). The span at 35-71 (VVRGSRTTTPAPSSVSNGESQTTAQSPSQTPNHPMFT) shows a compositional bias: polar residues.

Belongs to the phosphatase 2A regulatory subunit B56 family. PP2A consists of a common heteromeric enzyme, composed of a catalytic subunit (subunits C), a constant regulatory subunit (subunit A), and a variety of regulatory subunits such as subunits B (the R2/B/PR55/B55, R3/B''/PR72/PR130/PR59 and R5/B'/B56 families). Expressed ubiquitously.

The protein resides in the cytoplasm. The B regulatory subunit may modulate substrate selectivity and catalytic activity, and may also direct the localization of the catalytic enzyme to a particular subcellular compartment. In Arabidopsis thaliana (Mouse-ear cress), this protein is Serine/threonine protein phosphatase 2A 57 kDa regulatory subunit B' epsilon isoform (B'EPSILON).